We begin with the raw amino-acid sequence, 580 residues long: Formate--tetrahydrofolate ligase (580 aa).

ATP is bound at residue 65–72; that stretch reads TPHGEGKT.

The protein belongs to the formate--tetrahydrofolate ligase family.

The catalysed reaction is (6S)-5,6,7,8-tetrahydrofolate + formate + ATP = (6R)-10-formyltetrahydrofolate + ADP + phosphate. It participates in one-carbon metabolism; tetrahydrofolate interconversion. The sequence is that of Formate--tetrahydrofolate ligase from Shewanella baltica (strain OS223).